A 270-amino-acid chain; its full sequence is Mediator of RNA polymerase II transcription subunit 4 (270 aa).

Residues 1 to 22 (MAASSSGEKEKERLGGGLGVAG) form a disordered region. A2 bears the N-acetylalanine mark. Coiled coils occupy residues 24–48 (NSTR…IEML) and 90–131 (HHEM…AKEK). At S32 the chain carries Phosphoserine. The segment at 226-270 (DMSMNMLPPNHSSDFLLEPPGHNKENEDDVEIMSTDSSSSSSESD) is disordered. The segment covering 259–270 (STDSSSSSSESD) has biased composition (low complexity).

Belongs to the Mediator complex subunit 4 family. In terms of assembly, component of the Mediator complex, which is composed of MED1, MED4, MED6, MED7, MED8, MED9, MED10, MED11, MED12, MED13, MED13L, MED14, MED15, MED16, MED17, MED18, MED19, MED20, MED21, MED22, MED23, MED24, MED25, MED26, MED27, MED29, MED30, MED31, CCNC, CDK8 and CDC2L6/CDK11. The MED12, MED13, CCNC and CDK8 subunits form a distinct module termed the CDK8 module. Mediator containing the CDK8 module is less active than Mediator lacking this module in supporting transcriptional activation. Individual preparations of the Mediator complex lacking one or more distinct subunits have been variously termed ARC, CRSP, DRIP, PC2, SMCC and TRAP.

It localises to the nucleus. Its function is as follows. Component of the Mediator complex, a coactivator involved in the regulated transcription of nearly all RNA polymerase II-dependent genes. Mediator functions as a bridge to convey information from gene-specific regulatory proteins to the basal RNA polymerase II transcription machinery. Mediator is recruited to promoters by direct interactions with regulatory proteins and serves as a scaffold for the assembly of a functional preinitiation complex with RNA polymerase II and the general transcription factors. This is Mediator of RNA polymerase II transcription subunit 4 (MED4) from Homo sapiens (Human).